The following is a 363-amino-acid chain: Photosystem II protein D1 1 (363 aa).

3 helical membrane passes run Tyr32–Ile49, His121–Leu136, and Trp145–Ala159. Residue His121 participates in chlorophyll a binding. Tyr129 is a binding site for pheophytin a. Glu173 and Glu192 together coordinate [CaMn4O5] cluster. Residues Phe200–Leu221 traverse the membrane as a helical segment. Residue His201 coordinates chlorophyll a. Residues His218 and Ala268–Phe269 each bind a quinone. His218 contacts Fe cation. Residue His276 coordinates Fe cation. Residues Leu278–Leu292 traverse the membrane as a helical segment. 2 residues coordinate [CaMn4O5] cluster: His336 and Ala348. A propeptide spanning residues Ser349–Ser363 is cleaved from the precursor.

It belongs to the reaction center PufL/M/PsbA/D family. PSII is composed of 1 copy each of membrane proteins PsbA, PsbB, PsbC, PsbD, PsbE, PsbF, PsbH, PsbI, PsbJ, PsbK, PsbL, PsbM, PsbT, PsbX, PsbY, PsbZ, Psb30/Ycf12, peripheral proteins PsbO, CyanoQ (PsbQ), PsbU, PsbV and a large number of cofactors. It forms dimeric complexes. Requires The D1/D2 heterodimer binds P680, chlorophylls that are the primary electron donor of PSII, and subsequent electron acceptors. It shares a non-heme iron and each subunit binds pheophytin, quinone, additional chlorophylls, carotenoids and lipids. D1 provides most of the ligands for the Mn4-Ca-O5 cluster of the oxygen-evolving complex (OEC). There is also a Cl(-1) ion associated with D1 and D2, which is required for oxygen evolution. The PSII complex binds additional chlorophylls, carotenoids and specific lipids. as cofactor. In terms of processing, tyr-164 forms a radical intermediate that is referred to as redox-active TyrZ, YZ or Y-Z. C-terminally processed by CtpA; processing is essential to allow assembly of the oxygen-evolving complex and thus photosynthetic growth.

Its subcellular location is the cellular thylakoid membrane. The enzyme catalyses 2 a plastoquinone + 4 hnu + 2 H2O = 2 a plastoquinol + O2. Its function is as follows. Photosystem II (PSII) is a light-driven water:plastoquinone oxidoreductase that uses light energy to abstract electrons from H(2)O, generating O(2) and a proton gradient subsequently used for ATP formation. It consists of a core antenna complex that captures photons, and an electron transfer chain that converts photonic excitation into a charge separation. The D1/D2 (PsbA/PsbD) reaction center heterodimer binds P680, the primary electron donor of PSII as well as several subsequent electron acceptors. The sequence is that of Photosystem II protein D1 1 from Acaryochloris marina (strain MBIC 11017).